A 705-amino-acid polypeptide reads, in one-letter code: MNHIFETTVAGRTLKGEFGKLGMLSDCALNISYGDTVVLVNVNASPEPKEGIDFFPLSIEYQERLYAVGKIPGGFIKREGRPSDKAILNARAIDRPLRPLFPKGYRNDVQVVCTVVSVDQDNLPNILAMNGASLALCLSSIPFTIPVGTVSVGLIDGEFIINPTSKQREESILDLTVCATKDRVMMIEAGGEEIPEDVMYDAIMFGFEECKKIADFQQKVMEQYGKQKAELILHEIDADIEKEVREFAFDMVKEAMYITDKDSRNKAMDEVKEKVSEEFDEKYPDNLGDIGEAIYKMQKEVVRNMILNEKRRPDGRYFDEIRPLSSEVSLLPRTHGSGLFTRGLTQVMSVATLGSISEGQVLDGIEEETSKRYMHHYNFPSYSVGEVRPLRGPNRREIGHGALAEKAIEPLIPSEQEFPYAIRVVSEVLSSNGSTSQASVCGSTLALLDAGVPMKRPAAGIAMGLVTSEDLEKEEILTDIQGLEDFFGDMDFKVAGTEKGITAIQVDTKIKGLSNDCIKKAITNARKARLTILEVINNCIDKPREEVSKYAPKVFTMSINPSKIKDVIGAGGKTINKIIDETGVKIDIKEDGSVFVTAEDYESGKKALAMIDGYSREVKEGEVYLGKVTKIANFGAFVEILPGKEGLVHISKLDVKRVNKVEDVVSVGDEILVKVTEIDSMGRVNLSRKDAIKDSENNQDKDTEK.

2 residues coordinate Mg(2+): Asp-485 and Asp-491. The region spanning 552 to 611 (PKVFTMSINPSKIKDVIGAGGKTINKIIDETGVKIDIKEDGSVFVTAEDYESGKKALAMI) is the KH domain. Positions 621 to 689 (GEVYLGKVTK…SMGRVNLSRK (69 aa)) constitute an S1 motif domain.

Belongs to the polyribonucleotide nucleotidyltransferase family. The cofactor is Mg(2+).

It is found in the cytoplasm. It catalyses the reaction RNA(n+1) + phosphate = RNA(n) + a ribonucleoside 5'-diphosphate. In terms of biological role, involved in mRNA degradation. Catalyzes the phosphorolysis of single-stranded polyribonucleotides processively in the 3'- to 5'-direction. This Clostridium novyi (strain NT) protein is Polyribonucleotide nucleotidyltransferase.